The chain runs to 225 residues: Transcription factor HES-7 (225 aa).

The 58-residue stretch at 12–69 folds into the bHLH domain; sequence GPKMLKPLVEKRRRDRINRSLEELRLLLLERTRDQNLRNPKLEKAEILEFAVGYLRER. Residues 92 to 122 form the Orange domain; it reads YLSGFRECLLRLAAFAHDASPAARSQLFSAL. The segment at 124–225 is disordered; that stretch reads GYRRPKPPRP…PPPAFWRPWP (102 aa). 2 stretches are compositionally biased toward pro residues: residues 140 to 149 and 213 to 225; these read LPAPRPPLDP and PSLP…RPWP. The short motif at 221 to 224 is the WRPW motif element; that stretch reads WRPW.

In terms of assembly, transcription repression requires formation of a complex with a corepressor protein of the Groucho/TLE family.

It localises to the nucleus. Functionally, transcriptional repressor. Represses transcription from both N box- and E box-containing promoters. May with HES1, cooperatively regulate somite formation in the presomitic mesoderm (PSM). May function as a segmentation clock, which is essential for coordinated somite segmentation. The protein is Transcription factor HES-7 (Hes7) of Mus musculus (Mouse).